Reading from the N-terminus, the 217-residue chain is Neuron-specific vesicular protein calcyon (217 aa).

The disordered stretch occupies residues 1 to 25 (MVKLGCSFSGKPGKDPGDQDGAAMD). Topologically, residues 1–87 (MVKLGCSFSG…EEGRRLPTAR (87 aa)) are extracellular. Asparagine 73 carries an N-linked (GlcNAc...) asparagine glycan. Residues 88-108 (MIAFAMALLGCVLIMYKAIWY) form a helical membrane-spanning segment. Over 109–217 (DQFTCPDGFL…AGSAAPPPAQ (109 aa)) the chain is Cytoplasmic. Residues 162–217 (PAAWGDGYRAAKEERKGPTQAGAAAAATEPPGKPSAKAEKEAARKAAGSAAPPPAQ) form a disordered region.

This sequence belongs to the NSG family. In terms of assembly, interacts with CLTA. Post-translationally, glycosylated. Expressed in the pyramidal cells of the prefrontal cortex, in hypothalamus and in caudate nucleus. No expression in spleen. Up-regulated in the prefrontal cortex of schizophrenic patients with nearly twice the levels of non-schizophrenics.

It is found in the cytoplasmic vesicle membrane. The protein resides in the cell membrane. Its function is as follows. Interacts with clathrin light chain A and stimulates clathrin self-assembly and clathrin-mediated endocytosis. The protein is Neuron-specific vesicular protein calcyon (CALY) of Homo sapiens (Human).